We begin with the raw amino-acid sequence, 79 residues long: uncharacterized protein (79 aa).

The tract at residues 1–37 (MQLDVFSRMMFGDAAKPTEEKEEEQQEEVSQVSQTND) is disordered.

This is an uncharacterized protein from Bacillus subtilis (strain 168).